A 206-amino-acid chain; its full sequence is Large ribosomal subunit protein uL4 (206 aa).

A disordered region spans residues 48 to 78 (THSVKTRGHVSGGGAKPWRQKGTGRARAGSN).

This sequence belongs to the universal ribosomal protein uL4 family. In terms of assembly, part of the 50S ribosomal subunit.

In terms of biological role, one of the primary rRNA binding proteins, this protein initially binds near the 5'-end of the 23S rRNA. It is important during the early stages of 50S assembly. It makes multiple contacts with different domains of the 23S rRNA in the assembled 50S subunit and ribosome. Functionally, forms part of the polypeptide exit tunnel. The sequence is that of Large ribosomal subunit protein uL4 from Lawsonia intracellularis (strain PHE/MN1-00).